Reading from the N-terminus, the 362-residue chain is Phosphoserine aminotransferase (362 aa).

L-glutamate-binding residues include serine 9 and arginine 42. Pyridoxal 5'-phosphate is bound by residues 76–77 (GR), tryptophan 102, threonine 153, aspartate 174, and glutamine 197. Position 198 is an N6-(pyridoxal phosphate)lysine (lysine 198). A pyridoxal 5'-phosphate-binding site is contributed by 239–240 (NT).

It belongs to the class-V pyridoxal-phosphate-dependent aminotransferase family. SerC subfamily. In terms of assembly, homodimer. The cofactor is pyridoxal 5'-phosphate.

It is found in the cytoplasm. The catalysed reaction is O-phospho-L-serine + 2-oxoglutarate = 3-phosphooxypyruvate + L-glutamate. It carries out the reaction 4-(phosphooxy)-L-threonine + 2-oxoglutarate = (R)-3-hydroxy-2-oxo-4-phosphooxybutanoate + L-glutamate. The protein operates within amino-acid biosynthesis; L-serine biosynthesis; L-serine from 3-phospho-D-glycerate: step 2/3. It functions in the pathway cofactor biosynthesis; pyridoxine 5'-phosphate biosynthesis; pyridoxine 5'-phosphate from D-erythrose 4-phosphate: step 3/5. Catalyzes the reversible conversion of 3-phosphohydroxypyruvate to phosphoserine and of 3-hydroxy-2-oxo-4-phosphonooxybutanoate to phosphohydroxythreonine. The chain is Phosphoserine aminotransferase from Salmonella agona (strain SL483).